The primary structure comprises 540 residues: Chaperonin GroEL (540 aa).

Residues 29–32 (TLGP), 86–90 (DGTTT), glycine 413, 476–478 (NAA), and aspartate 492 each bind ATP.

Belongs to the chaperonin (HSP60) family. In terms of assembly, forms a cylinder of 14 subunits composed of two heptameric rings stacked back-to-back. Interacts with the co-chaperonin GroES.

It localises to the cytoplasm. The enzyme catalyses ATP + H2O + a folded polypeptide = ADP + phosphate + an unfolded polypeptide.. Together with its co-chaperonin GroES, plays an essential role in assisting protein folding. The GroEL-GroES system forms a nano-cage that allows encapsulation of the non-native substrate proteins and provides a physical environment optimized to promote and accelerate protein folding. The protein is Chaperonin GroEL of Streptococcus anginosus.